The primary structure comprises 418 residues: UDP-N-acetylglucosamine 1-carboxyvinyltransferase (418 aa).

22–23 (KN) is a phosphoenolpyruvate binding site. Position 93 (R93) interacts with UDP-N-acetyl-alpha-D-glucosamine. C117 functions as the Proton donor in the catalytic mechanism. Residue C117 is modified to 2-(S-cysteinyl)pyruvic acid O-phosphothioketal. UDP-N-acetyl-alpha-D-glucosamine is bound by residues 122 to 126 (RPIDL), D306, and L328.

This sequence belongs to the EPSP synthase family. MurA subfamily.

It is found in the cytoplasm. It catalyses the reaction phosphoenolpyruvate + UDP-N-acetyl-alpha-D-glucosamine = UDP-N-acetyl-3-O-(1-carboxyvinyl)-alpha-D-glucosamine + phosphate. Its pathway is cell wall biogenesis; peptidoglycan biosynthesis. Cell wall formation. Adds enolpyruvyl to UDP-N-acetylglucosamine. This Campylobacter hominis (strain ATCC BAA-381 / DSM 21671 / CCUG 45161 / LMG 19568 / NCTC 13146 / CH001A) protein is UDP-N-acetylglucosamine 1-carboxyvinyltransferase.